A 372-amino-acid polypeptide reads, in one-letter code: MKISTLAVVSAFAVTAIAGPVRPDGIGSDKYLIELGPGETQWVTKDQKHHMRAAGKTFIDITDEFGSGFTTTEVVPANYPKSARHASLIKPLIANLSKENLMRDLTTLTKFNNRYYESDTGVESATWILQQVQKIIKDSGVKGAKVEKFTNQFKQFNIIATIPGSSKSTVIVGAHQDSINSKSPMKGRAPGADDNGSGTVVILEAFRNILKSKAIQAANATNTLEFHWYAGEEGGLLGSNNIFKKYKADGRQVKAMLNQDLTGFTNNGKPEQLGLIADNTNQQLNEFCKMIVKQYASIPIVEAKCGYACSDHASAHRNGFPASFVAETSYRNTNPYLHTDGDVIANLNFNHMLEHAKVVLGFMGELAMAPNL.

The N-terminal stretch at 1–18 is a signal peptide; it reads MKISTLAVVSAFAVTAIA. The N-linked (GlcNAc...) asparagine glycan is linked to asparagine 95. 2 residues coordinate Zn(2+): histidine 175 and aspartate 194. 2 N-linked (GlcNAc...) asparagine glycosylation sites follow: asparagine 195 and asparagine 219. Residues glutamate 233 and aspartate 260 each coordinate Zn(2+). A disulfide bond links cysteine 305 and cysteine 309. Residue histidine 338 participates in Zn(2+) binding.

The protein belongs to the peptidase M28 family. M28E subfamily. In terms of assembly, monomer. It depends on Zn(2+) as a cofactor.

The protein localises to the secreted. Its function is as follows. Probable extracellular aminopeptidase which contributes to pathogenicity. The polypeptide is Probable leucine aminopeptidase MCYG_03459 (Arthroderma otae (strain ATCC MYA-4605 / CBS 113480) (Microsporum canis)).